We begin with the raw amino-acid sequence, 118 residues long: Small ribosomal subunit protein uS13 (118 aa).

The interval glycine 94 to lysine 118 is disordered.

The protein belongs to the universal ribosomal protein uS13 family. As to quaternary structure, part of the 30S ribosomal subunit. Forms a loose heterodimer with protein S19. Forms two bridges to the 50S subunit in the 70S ribosome.

Located at the top of the head of the 30S subunit, it contacts several helices of the 16S rRNA. In the 70S ribosome it contacts the 23S rRNA (bridge B1a) and protein L5 of the 50S subunit (bridge B1b), connecting the 2 subunits; these bridges are implicated in subunit movement. Contacts the tRNAs in the A and P-sites. The sequence is that of Small ribosomal subunit protein uS13 from Salmonella typhi.